The sequence spans 628 residues: Voltage-gated potassium channel KCNC4 (628 aa).

Disordered stretches follow at residues 1-24 and 62-88; these read MISS…SKTC and LAWL…GSSG. An inactivation gate region spans residues 1-28; the sequence is MISSVCVSSYRGRKSGNKPPSKTCLKEE. The Cytoplasmic portion of the chain corresponds to 1–230; the sequence is MISSVCVSSY…EDPYSSRAAR (230 aa). Phosphoserine occurs at positions 8, 9, 15, and 21. Positions 77-88 are enriched in gly residues; that stretch reads DGGGAGSSGSSG. The Zn(2+) site is built by H120, C126, C147, and C148. The helical transmembrane segment at 231 to 251 threads the bilayer; that stretch reads VVAFASLFFILVSITTFCLET. N-linked (GlcNAc...) asparagine glycosylation is found at N260 and N269. The chain crosses the membrane as a helical span at residues 282–302; sequence EPILTYIEGVCVMWFTLEFLV. At 303-316 the chain is on the cytoplasmic side; that stretch reads RIVCCPDTLDFVKN. Residues 317–337 form a helical membrane-spanning segment; that stretch reads LLNIIDFVAILPFYLEVGLSG. Residues 349 to 368 traverse the membrane as a helical; Voltage-sensor segment; sequence FLRVVRFVRILRIFKLTRHF. The Cytoplasmic segment spans residues 369 to 384; sequence VGLRVLGHTLRASTNE. Residues 385–405 form a helical membrane-spanning segment; the sequence is FLLLIIFLALGVLIFATMIYY. K(+) contacts are provided by T440, L441, G442, and Y443. The short motif at 440 to 445 is the Selectivity filter element; sequence TLGYGD. The chain crosses the membrane as a helical span at residues 456–476; sequence VGALCALAGVLTIAMPVPVIV. At 477–628 the chain is on the cytoplasmic side; that stretch reads NNFGMYYSLA…CVPVSHTCAL (152 aa). Residues 493-584 form a disordered region; sequence PKKRKKHVPR…RRALRRSGTR (92 aa). The segment covering 531–546 has biased composition (basic and acidic residues); that stretch reads AREEGVVERKRADSKQ.

This sequence belongs to the potassium channel family. C (Shaw) (TC 1.A.1.2) subfamily. Kv3.4/KCNC4 sub-subfamily. Homotetramer. Heterotetramer of potassium channel proteins. Phosphorylation of serine residues in the inactivation gate inhibits rapid channel closure.

The protein localises to the membrane. The enzyme catalyses K(+)(in) = K(+)(out). Functionally, voltage-gated potassium channel that opens in response to the voltage difference across the membrane, forming a potassium-selective channel through which potassium ions pass in accordance with their electrochemical gradient. The channel displays rapid activation and inactivation kinetics. In Mus musculus (Mouse), this protein is Voltage-gated potassium channel KCNC4.